Consider the following 93-residue polypeptide: Long neurotoxin 2 (93 aa).

An N-terminal signal peptide occupies residues 1 to 21; it reads MKILLLTLVVVTIVCLDLAYT. Cystine bridges form between Cys24–Cys42, Cys35–Cys63, Cys48–Cys52, Cys67–Cys78, and Cys79–Cys84.

The protein belongs to the three-finger toxin family. Long-chain subfamily. Type II alpha-neurotoxin sub-subfamily. As to expression, expressed by the venom gland.

Its subcellular location is the secreted. Its function is as follows. Binds with high affinity to muscular (alpha-1/CHRNA1) and neuronal (alpha-7/CHRNA7) nicotinic acetylcholine receptor (nAChR) and inhibits acetylcholine from binding to the receptor, thereby impairing neuromuscular and neuronal transmission. The sequence is that of Long neurotoxin 2 from Hydrophis hardwickii (Hardwick's spine-bellied seasnake).